The following is a 152-amino-acid chain: Xanthine-guanine phosphoribosyltransferase (152 aa).

5-phospho-alpha-D-ribose 1-diphosphate-binding positions include 37-38, R69, and 88-96; these read RG and DDLVDTGGT. GMP is bound at residue R69. D89 contributes to the Mg(2+) binding site. Positions 92 and 135 each coordinate guanine. D92 and I135 together coordinate xanthine. Residues 92-96 and 134-135 each bind GMP; these read DTGGT and WI.

This sequence belongs to the purine/pyrimidine phosphoribosyltransferase family. XGPT subfamily. Homotetramer. It depends on Mg(2+) as a cofactor.

Its subcellular location is the cell inner membrane. The enzyme catalyses GMP + diphosphate = guanine + 5-phospho-alpha-D-ribose 1-diphosphate. It catalyses the reaction XMP + diphosphate = xanthine + 5-phospho-alpha-D-ribose 1-diphosphate. It carries out the reaction IMP + diphosphate = hypoxanthine + 5-phospho-alpha-D-ribose 1-diphosphate. It functions in the pathway purine metabolism; GMP biosynthesis via salvage pathway; GMP from guanine: step 1/1. Its pathway is purine metabolism; XMP biosynthesis via salvage pathway; XMP from xanthine: step 1/1. Purine salvage pathway enzyme that catalyzes the transfer of the ribosyl-5-phosphate group from 5-phospho-alpha-D-ribose 1-diphosphate (PRPP) to the N9 position of the 6-oxopurines guanine and xanthine to form the corresponding ribonucleotides GMP (guanosine 5'-monophosphate) and XMP (xanthosine 5'-monophosphate), with the release of PPi. To a lesser extent, also acts on hypoxanthine. This chain is Xanthine-guanine phosphoribosyltransferase, found in Escherichia coli O7:K1 (strain IAI39 / ExPEC).